The sequence spans 367 residues: Phosphoglycerate kinase (367 aa).

(2R)-3-phosphoglycerate is bound by residues V1, D2, F3, N4, R17, S40, H41, G43, R44, L98, R99, H146, and R147. G190 contacts ADP. G190 is a CDP binding site. 2 residues coordinate AMP: A191 and K192. A191 contacts ATP. A191 provides a ligand contact to Mg(2+). A194 and D195 together coordinate Mg(2+). D195 is a CDP binding site. AMP is bound at residue K196. K196 is a binding site for ATP. ADP is bound at residue G214. G214 serves as a coordination point for CDP. 2 residues coordinate AMP: G215 and G289. Residues G215 and G289 each coordinate ATP. Residues G314 and F319 each coordinate CDP. Residue F319 participates in ADP binding. E320 serves as a coordination point for AMP. ATP is bound by residues E320, D351, and T352. Position 351 (D351) interacts with Mg(2+).

It belongs to the phosphoglycerate kinase family. Monomer. Mg(2+) is required as a cofactor.

The catalysed reaction is (2R)-3-phosphoglycerate + ATP = (2R)-3-phospho-glyceroyl phosphate + ADP. Its pathway is carbohydrate degradation; glycolysis; pyruvate from D-glyceraldehyde 3-phosphate: step 2/5. The protein is Phosphoglycerate kinase (PGK) of Paramecium primaurelia.